Reading from the N-terminus, the 1774-residue chain is Kinesin-like protein KIF20B (1774 aa).

Residues 58–477 (YLQVCLRIRP…LKFSTTAQRV (420 aa)) form the Kinesin motor domain. 152–159 (GLTNSGKT) lines the ATP pocket. Position 486 is a phosphoserine (Ser486). Coiled-coil stretches lie at residues 525 to 601 (EDVL…KIRE) and 705 to 747 (QEAI…LVQA). Residues 538–555 (EENEETQNMETELTDEDS) show a composition bias toward acidic residues. Disordered regions lie at residues 538-557 (EENE…DSDK) and 740-799 (ESNS…PPAK). The segment covering 741–778 (SNSLVQALKTSSKVDTSLTSNKSTCNETSEMPKNSRAQ) has biased composition (polar residues). Basic and acidic residues predominate over residues 779–788 (THSERKRLNE). The stretch at 824–946 (SEVVEGNRVL…QMQTKIDELR (123 aa)) forms a coiled coil. Ser950 is modified (phosphoserine). The interval 1002–1059 (ENSFHASIEAIWEECKEIVKASSKKSHQIQGLEEQIEKLQVEVKGYREENSDLRAQES) is necessary and sufficient for interaction with SHTN1. A coiled-coil region spans residues 1021 to 1507 (KASSKKSHQI…DEEIQELRKA (487 aa)). 2 positions are modified to phosphoserine: Ser1107 and Ser1542. Residues 1514 to 1774 (TENQTMNPKP…KRRLRTRTAK (261 aa)) are interaction with PIN1. Thr1598 is modified (phosphothreonine; by CDK1). Ser1612 carries the post-translational modification Phosphoserine. The segment at 1625–1663 (KKNSTPRSNVKFPVSEHRNSPVKKEQKVSVGPSSKKTYS) is disordered. The segment covering 1638–1651 (VSEHRNSPVKKEQK) has biased composition (basic and acidic residues). Residues Ser1669 and Ser1694 each carry the phosphoserine modification.

It belongs to the TRAFAC class myosin-kinesin ATPase superfamily. Kinesin family. In terms of assembly, oligomerizes (via kinesin motor domain). Associates with microtubules. Interacts (via C-terminal globular tail region) with PIN1 (via WW domain). Interacts with PRC1. Interacts with SHTN1 (via N-terminus); the interaction is direct and promotes the association of SHTN1 to microtubules in primary neurons. Associates with microtubules. Post-translationally, phosphorylated during mitosis by CDK1. Expressed in the brain (at protein level).

It is found in the nucleus. The protein resides in the cytoplasm. The protein localises to the cytoskeleton. Its subcellular location is the microtubule organizing center. It localises to the centrosome. It is found in the nucleolus. The protein resides in the nucleoplasm. The protein localises to the spindle. Its subcellular location is the spindle pole. It localises to the midbody. It is found in the cell projection. The protein resides in the axon. The protein localises to the growth cone. Its function is as follows. Plus-end-directed motor enzyme that is required for completion of cytokinesis. Required for proper midbody organization and abscission in polarized cortical stem cells. Plays a role in the regulation of neuronal polarization by mediating the transport of specific cargos. Participates in the mobilization of SHTN1 and in the accumulation of PIP3 in the growth cone of primary hippocampal neurons in a tubulin and actin-dependent manner. In the developing telencephalon, cooperates with SHTN1 to promote both the transition from the multipolar to the bipolar stage and the radial migration of cortical neurons from the ventricular zone toward the superficial layer of the neocortex. Involved in cerebral cortex growth. Acts as an oncogene for promoting bladder cancer cells proliferation, apoptosis inhibition and carcinogenic progression. In Mus musculus (Mouse), this protein is Kinesin-like protein KIF20B.